A 359-amino-acid polypeptide reads, in one-letter code: Small ribosomal subunit protein mS22 (359 aa).

This sequence belongs to the mitochondrion-specific ribosomal protein mS22 family. In terms of assembly, component of the mitochondrial ribosome small subunit (28S) which comprises a 12S rRNA and about 30 distinct proteins.

Its subcellular location is the mitochondrion. This chain is Small ribosomal subunit protein mS22 (MRPS22), found in Bos taurus (Bovine).